The sequence spans 97 residues: DNA-directed RNA polymerase subunit omega (97 aa).

This sequence belongs to the RNA polymerase subunit omega family. As to quaternary structure, the RNAP catalytic core consists of 2 alpha, 1 beta, 1 beta' and 1 omega subunit. When a sigma factor is associated with the core the holoenzyme is formed, which can initiate transcription.

The enzyme catalyses RNA(n) + a ribonucleoside 5'-triphosphate = RNA(n+1) + diphosphate. Its function is as follows. Promotes RNA polymerase assembly. Latches the N- and C-terminal regions of the beta' subunit thereby facilitating its interaction with the beta and alpha subunits. The sequence is that of DNA-directed RNA polymerase subunit omega from Coxiella burnetii (strain Dugway 5J108-111).